The following is a 530-amino-acid chain: UDP-glucuronosyltransferase 2B17 (530 aa).

An N-terminal signal peptide occupies residues 1–23; that stretch reads MSLKWMSVFLLMQLSCYFSSGSC. Asn-65 is a glycosylation site (N-linked (GlcNAc...) asparagine). Lys-136 is subject to N6-succinyllysine. Residues Asn-316 and Asn-483 are each glycosylated (N-linked (GlcNAc...) asparagine). Residues 495-515 form a helical membrane-spanning segment; it reads IAFLLACVATMIFMITKCCLF.

It belongs to the UDP-glycosyltransferase family. As to expression, expressed in various tissues including the liver, kidney, testis, uterus, placenta, mammary gland, adrenal gland, skin and prostate.

Its subcellular location is the endoplasmic reticulum membrane. The enzyme catalyses glucuronate acceptor + UDP-alpha-D-glucuronate = acceptor beta-D-glucuronoside + UDP + H(+). It catalyses the reaction 17alpha-estradiol + UDP-alpha-D-glucuronate = 17alpha-estradiol 3-O-(beta-D-glucuronate) + UDP + H(+). It carries out the reaction 17alpha-estradiol + UDP-alpha-D-glucuronate = 17alpha-estradiol 17-O-(beta-D-glucuronate) + UDP + H(+). The catalysed reaction is 17beta-estradiol + UDP-alpha-D-glucuronate = 17beta-estradiol 17-O-(beta-D-glucuronate) + UDP + H(+). The enzyme catalyses 17beta-hydroxy-5alpha-androstan-3-one + UDP-alpha-D-glucuronate = 5alpha-dihydrotestosterone 17-O-(beta-D-glucuronate) + UDP + H(+). It catalyses the reaction testosterone + UDP-alpha-D-glucuronate = testosterone 17-O-(beta-D-glucuronate) + UDP + H(+). Functionally, UDP-glucuronosyltransferase (UGT) that catalyzes phase II biotransformation reactions in which lipophilic substrates are conjugated with glucuronic acid to increase the metabolite's water solubility, thereby facilitating excretion into either the urine or bile. Catalyzes the glucuronidation of endogenous steroid hormones such as androgens (epitestosterone, androsterone) and estrogens (estradiol, epiestradiol). This is UDP-glucuronosyltransferase 2B17 from Homo sapiens (Human).